Reading from the N-terminus, the 327-residue chain is Phenylalanine--tRNA ligase alpha subunit (327 aa).

E252 is a Mg(2+) binding site.

The protein belongs to the class-II aminoacyl-tRNA synthetase family. Phe-tRNA synthetase alpha subunit type 1 subfamily. As to quaternary structure, tetramer of two alpha and two beta subunits. Mg(2+) serves as cofactor.

It is found in the cytoplasm. It catalyses the reaction tRNA(Phe) + L-phenylalanine + ATP = L-phenylalanyl-tRNA(Phe) + AMP + diphosphate + H(+). This Pectobacterium carotovorum subsp. carotovorum (strain PC1) protein is Phenylalanine--tRNA ligase alpha subunit.